A 439-amino-acid chain; its full sequence is Innexin-19 (439 aa).

4 consecutive transmembrane segments (helical) span residues 33 to 53, 103 to 123, 199 to 219, and 285 to 305; these read PLIL…GTPI, QWVP…CIFW, IVYS…FFIL, and VFAF…CSFI.

This sequence belongs to the pannexin family.

Its subcellular location is the cell membrane. It is found in the cell junction. The protein resides in the gap junction. Structural component of the gap junctions that specifically coordinates left-right asymmetry in the developing nervous system. Acts by forming gap junction network linking embryonic neurons and providing electrical coupling between cells, leading to promote or inhibit AWC signaling. This is Innexin-19 (inx-19) from Caenorhabditis briggsae.